We begin with the raw amino-acid sequence, 114 residues long: UPF0102 protein HPAG1_0809 (114 aa).

This sequence belongs to the UPF0102 family.

This is UPF0102 protein HPAG1_0809 from Helicobacter pylori (strain HPAG1).